The sequence spans 295 residues: Light-independent protochlorophyllide reductase iron-sulfur ATP-binding protein (295 aa).

ATP is bound by residues 39–44 (GIGKST) and K68. Position 43 (S43) interacts with Mg(2+). 2 residues coordinate [4Fe-4S] cluster: C124 and C158. Residue 209-210 (NR) coordinates ATP.

The protein belongs to the NifH/BchL/ChlL family. Homodimer. Protochlorophyllide reductase is composed of three subunits; ChlL, ChlN and ChlB. [4Fe-4S] cluster serves as cofactor.

The enzyme catalyses chlorophyllide a + oxidized 2[4Fe-4S]-[ferredoxin] + 2 ADP + 2 phosphate = protochlorophyllide a + reduced 2[4Fe-4S]-[ferredoxin] + 2 ATP + 2 H2O. The protein operates within porphyrin-containing compound metabolism; chlorophyll biosynthesis (light-independent). In terms of biological role, component of the dark-operative protochlorophyllide reductase (DPOR) that uses Mg-ATP and reduced ferredoxin to reduce ring D of protochlorophyllide (Pchlide) to form chlorophyllide a (Chlide). This reaction is light-independent. The L component serves as a unique electron donor to the NB-component of the complex, and binds Mg-ATP. The polypeptide is Light-independent protochlorophyllide reductase iron-sulfur ATP-binding protein (Prochlorococcus marinus (strain MIT 9312)).